Here is a 122-residue protein sequence, read N- to C-terminus: Ribosome-binding factor A (122 aa).

Belongs to the RbfA family. Monomer. Binds 30S ribosomal subunits, but not 50S ribosomal subunits or 70S ribosomes.

It localises to the cytoplasm. Its function is as follows. One of several proteins that assist in the late maturation steps of the functional core of the 30S ribosomal subunit. Associates with free 30S ribosomal subunits (but not with 30S subunits that are part of 70S ribosomes or polysomes). Required for efficient processing of 16S rRNA. May interact with the 5'-terminal helix region of 16S rRNA. The protein is Ribosome-binding factor A of Dichelobacter nodosus (strain VCS1703A).